We begin with the raw amino-acid sequence, 233 residues long: MADS-box transcription factor 56 (233 aa).

One can recognise an MADS-box domain in the interval methionine 1–proline 61. Positions isoleucine 87 to alanine 177 constitute a K-box domain.

Its subcellular location is the nucleus. Functionally, probable transcription factor. The chain is MADS-box transcription factor 56 (MADS56) from Oryza sativa subsp. japonica (Rice).